We begin with the raw amino-acid sequence, 563 residues long: Eukaryotic translation initiation factor 3 subunit D-1 (563 aa).

The interval 98–167 is disordered; the sequence is VQKPPHQRGR…GPPPKMRESS (70 aa). Residues 100 to 121 show a composition bias toward basic residues; it reads KPPHQRGRFRNMRNSRSGRGRN. Position 128 is a phosphothreonine (threonine 128). Positions 291–305 are RNA gate; that stretch reads EFDLLTVNETSVEPP.

The protein belongs to the eIF-3 subunit D family. Component of the eukaryotic translation initiation factor 3 (eIF-3) complex. The eIF-3 complex interacts with pix.

The protein localises to the cytoplasm. Functionally, mRNA cap-binding component of the eukaryotic translation initiation factor 3 (eIF-3) complex, which is involved in protein synthesis of a specialized repertoire of mRNAs and, together with other initiation factors, stimulates binding of mRNA and methionyl-tRNAi to the 40S ribosome. The eIF-3 complex specifically targets and initiates translation of a subset of mRNAs involved in cell proliferation. In the eIF-3 complex, eif3d specifically recognizes and binds the 7-methylguanosine cap of a subset of mRNAs. The chain is Eukaryotic translation initiation factor 3 subunit D-1 from Drosophila virilis (Fruit fly).